Consider the following 275-residue polypeptide: MPELPEVETTRRGIDTVITGRTLRRLVVREARMRWPIPPALPDLLAGRTVLECGRRGKYLLLRFDHGVQIVHLGMSGSLRRVPEQEAPRKHDHVDWVFDHAVLRLHDPRRFGAVLWHPDEAGPIAAHPLLARLGIEPFDPRFDGRWLHAYFRGRRVAIKQALLAGDAVVGVGNIYASESLFRAGIDPRTAAQRVSAARCDRLAAAIRATLSDALDSGGSTLRDYVGASGEPGAYFAIHAAVYERAGLPCRVCGTPIRRLVQGQRATYFCPSCQKR.

The active-site Schiff-base intermediate with DNA is the proline 2. The active-site Proton donor is glutamate 3. The Proton donor; for beta-elimination activity role is filled by lysine 58. 3 residues coordinate DNA: histidine 91, arginine 109, and arginine 154. The FPG-type zinc finger occupies 240–274; it reads AVYERAGLPCRVCGTPIRRLVQGQRATYFCPSCQK. Arginine 264 acts as the Proton donor; for delta-elimination activity in catalysis.

It belongs to the FPG family. In terms of assembly, monomer. Requires Zn(2+) as cofactor.

It catalyses the reaction Hydrolysis of DNA containing ring-opened 7-methylguanine residues, releasing 2,6-diamino-4-hydroxy-5-(N-methyl)formamidopyrimidine.. The enzyme catalyses 2'-deoxyribonucleotide-(2'-deoxyribose 5'-phosphate)-2'-deoxyribonucleotide-DNA = a 3'-end 2'-deoxyribonucleotide-(2,3-dehydro-2,3-deoxyribose 5'-phosphate)-DNA + a 5'-end 5'-phospho-2'-deoxyribonucleoside-DNA + H(+). In terms of biological role, involved in base excision repair of DNA damaged by oxidation or by mutagenic agents. Acts as a DNA glycosylase that recognizes and removes damaged bases. Has a preference for oxidized purines, such as 7,8-dihydro-8-oxoguanine (8-oxoG). Has AP (apurinic/apyrimidinic) lyase activity and introduces nicks in the DNA strand. Cleaves the DNA backbone by beta-delta elimination to generate a single-strand break at the site of the removed base with both 3'- and 5'-phosphates. The protein is Formamidopyrimidine-DNA glycosylase of Bordetella pertussis (strain Tohama I / ATCC BAA-589 / NCTC 13251).